The following is a 419-amino-acid chain: Synaptosomal-associated protein 47 (419 aa).

T-SNARE coiled-coil homology domains lie at 109 to 171 (AANP…LTEL) and 356 to 418 (KDWP…MRKL).

The protein belongs to the SVAP1 family. As to quaternary structure, associates with the BLOC-1 complex. Interacts with BLOC1S6. Forms a complex containing SNAP47, VAMP2 and STX1A.

It is found in the endomembrane system. Its subcellular location is the cytoplasm. The protein localises to the perinuclear region. May play a role in intracellular membrane fusion. This is Synaptosomal-associated protein 47 (Snap47) from Rattus norvegicus (Rat).